A 342-amino-acid chain; its full sequence is Serine/threonine-protein kinase SAPK1 (342 aa).

Positions 4 to 260 constitute a Protein kinase domain; that stretch reads YEVMRDIGSG…IPEIKNHPWF (257 aa). Residues 10 to 18 and Lys-33 contribute to the ATP site; that span reads IGSGNFGVA. Asp-123 (proton acceptor) is an active-site residue. A C-terminal region spans residues 253 to 342; sequence EIKNHPWFLK…ENSGDFVCAL (90 aa).

Belongs to the protein kinase superfamily. Ser/Thr protein kinase family. In terms of processing, phosphorylated. Expressed in leaf blades, leaf sheaths and roots. Expressed in shoots and roots of young seedlings.

It carries out the reaction L-seryl-[protein] + ATP = O-phospho-L-seryl-[protein] + ADP + H(+). The enzyme catalyses L-threonyl-[protein] + ATP = O-phospho-L-threonyl-[protein] + ADP + H(+). Activated by phosphorylation in response to hyperosmotic stress within 5 minutes. Functionally, may play a role in signal transduction of hyperosmotic response. This is Serine/threonine-protein kinase SAPK1 (SAPK1) from Oryza sativa subsp. japonica (Rice).